The chain runs to 358 residues: UDP-N-acetylglucosamine--N-acetylmuramyl-(pentapeptide) pyrophosphoryl-undecaprenol N-acetylglucosamine transferase (358 aa).

UDP-N-acetyl-alpha-D-glucosamine contacts are provided by S196 and Q287.

It belongs to the glycosyltransferase 28 family. MurG subfamily.

The protein localises to the cell membrane. It carries out the reaction Mur2Ac(oyl-L-Ala-gamma-D-Glu-L-Lys-D-Ala-D-Ala)-di-trans,octa-cis-undecaprenyl diphosphate + UDP-N-acetyl-alpha-D-glucosamine = beta-D-GlcNAc-(1-&gt;4)-Mur2Ac(oyl-L-Ala-gamma-D-Glu-L-Lys-D-Ala-D-Ala)-di-trans,octa-cis-undecaprenyl diphosphate + UDP + H(+). It functions in the pathway cell wall biogenesis; peptidoglycan biosynthesis. Functionally, cell wall formation. Catalyzes the transfer of a GlcNAc subunit on undecaprenyl-pyrophosphoryl-MurNAc-pentapeptide (lipid intermediate I) to form undecaprenyl-pyrophosphoryl-MurNAc-(pentapeptide)GlcNAc (lipid intermediate II). This is UDP-N-acetylglucosamine--N-acetylmuramyl-(pentapeptide) pyrophosphoryl-undecaprenol N-acetylglucosamine transferase from Streptococcus uberis (strain ATCC BAA-854 / 0140J).